The chain runs to 1070 residues: uncharacterized protein (1070 aa).

5 disordered regions span residues 66–88, 355–388, 423–483, 667–692, and 735–786; these read EKEKETNNENTSNVNKIKSPGLE, DLDFSNVRNKNKEDDMDFSNVRNKKKEDDMDFSN, EDDL…EQID, EELKNDISSETTKEEKNTEHKKEETE, and SKTQ…NNNN. A compositionally biased stretch (low complexity) spans 73-83; the sequence is NENTSNVNKIK. 2 stretches are compositionally biased toward basic and acidic residues: residues 435-460 and 474-483; these read KKEESKENDTNKSEKPLYLRRLEEYR and MKMHEKEQID. A coiled-coil region spans residues 475 to 736; sequence KMHEKEQIDD…EMRLQLIRSK (262 aa). Residues 735–745 are compositionally biased toward polar residues; the sequence is SKTQGTSSTFI. A compositionally biased stretch (basic and acidic residues) spans 751 to 765; the sequence is KHLESLKEEKKKEVK. Low complexity predominate over residues 773-786; the sequence is NNNNNNNNNNNNNN.

This is an uncharacterized protein from Plasmodium falciparum (isolate 3D7).